The following is a 258-amino-acid chain: Acetylglutamate kinase (258 aa).

Substrate contacts are provided by residues 41 to 42 (GG), R63, and N156.

This sequence belongs to the acetylglutamate kinase family. ArgB subfamily.

It localises to the cytoplasm. It carries out the reaction N-acetyl-L-glutamate + ATP = N-acetyl-L-glutamyl 5-phosphate + ADP. It participates in amino-acid biosynthesis; L-arginine biosynthesis; N(2)-acetyl-L-ornithine from L-glutamate: step 2/4. Functionally, catalyzes the ATP-dependent phosphorylation of N-acetyl-L-glutamate. In Bacillus velezensis (strain DSM 23117 / BGSC 10A6 / LMG 26770 / FZB42) (Bacillus amyloliquefaciens subsp. plantarum), this protein is Acetylglutamate kinase.